A 574-amino-acid polypeptide reads, in one-letter code: Secreted lipase 1 (574 aa).

An N-terminal signal peptide occupies residues 1–17; the sequence is MKLSLVPIFALLSTAFA. Cys-95 and Cys-132 are joined by a disulfide. The Acyl-ester intermediate role is filled by Ser-244. A disulfide bridge connects residues Cys-303 and Cys-312. N-linked (GlcNAc...) asparagine glycosylation is present at Asn-323. The Charge relay system role is filled by Glu-376. Residue Asn-386 is glycosylated (N-linked (GlcNAc...) asparagine). The active-site Charge relay system is the His-489. Asn-524 carries an N-linked (GlcNAc...) asparagine glycan.

This sequence belongs to the type-B carboxylesterase/lipase family.

The protein resides in the secreted. The catalysed reaction is a carboxylic ester + H2O = an alcohol + a carboxylate + H(+). Functionally, secreted lipase that allows the use of hydrolyzed lipids as carbon sources. Has highest activity with methyl umbelliferyl oleate (C18:1), whereas much lower activities are obtained with the respective esters of palmitate (C16:0) and stearate (C18:0) (24% and 12% of the activity obtained with umbelliferyl oleate, respectively). Hydrolyzes 1- and 3-positioned ester bonds in preference to 2-positioned ester bonds. The production rate of monoglycerides is lower than that of diacylglycerides. Seems not required for the penetration of intact host tissue. This Botryotinia fuckeliana (strain B05.10) (Noble rot fungus) protein is Secreted lipase 1.